The sequence spans 343 residues: Transcription factor MYB83 (343 aa).

Positions 1–16 are enriched in basic and acidic residues; that stretch reads MMMRKPDITTIRDKGK. Residues 1-33 form a disordered region; the sequence is MMMRKPDITTIRDKGKPNHACGGNNNKPKLRKG. 2 HTH myb-type domains span residues 27–79 and 80–134; these read KPKL…INYL and RPDL…KKRL. 2 DNA-binding regions (H-T-H motif) span residues 55-79 and 107-130; these read WSDIARNAGLLRCGKSCRLRWINYL and WSQIATRLPGRTDNEIKNFWNSTL. The tract at residues 134 to 172 is disordered; it reads LKNNSNNNTSSGSSPNNSNSNSLDPRDQHVDMGGNSTSL. The span at 136–155 shows a compositional bias: low complexity; the sequence is NNSNNNTSSGSSPNNSNSNS.

As to expression, expressed specifically in fiber and vessel cells that are undergoing secondary wall thickening in floral stems. Expressed in vessels but not in xylary fibers in the developing secondary xylem of roots.

It is found in the nucleus. Transcription factor that acts as a molecular switch in the NAC012/SND1-mediated transcriptional network regulating secondary wall biosynthesis. Is directly activated by NAC012/SND1 and its close homologs, including NAC043/NST1, NAC066/NST2, NAC101/VND6 and NAC030/VND7. Is required for functional expression of a number of secondary wall-associated transcription factors and secondary wall biosynthetic genes involved in cellulose, xylan and lignin synthesis. Functions redundantly with MYB46 in the transcriptional regulatory cascade leading to secondary wall formation in fibers and vessels. Transcription activator that binds to the DNA consensus sequence 5'-ACC[AT]A[AC][TC]-3', designated as the secondary wall MYB-responsive element (SMRE). Regulates directly numerous transcription factors and a number of genes involved in secondary wall biosynthesis that contain SMRE elements in their promoters. In Arabidopsis thaliana (Mouse-ear cress), this protein is Transcription factor MYB83.